The sequence spans 208 residues: UPF0316 protein SERP1448 (208 aa).

3 helical membrane passes run 8–28 (PWLM…FLTM), 40–60 (VAAV…GLVM), and 66–86 (IQNI…GMKI).

This sequence belongs to the UPF0316 family.

The protein localises to the cell membrane. The chain is UPF0316 protein SERP1448 from Staphylococcus epidermidis (strain ATCC 35984 / DSM 28319 / BCRC 17069 / CCUG 31568 / BM 3577 / RP62A).